Reading from the N-terminus, the 137-residue chain is Leaf-specific thionin DB4 (137 aa).

The N-terminal stretch at 1 to 28 (MAPSKSIKSVVICVLILGLVLEQVQVEG) is a signal peptide. 4 disulfide bridges follow: cysteine 31–cysteine 68, cysteine 32–cysteine 60, cysteine 40–cysteine 58, and cysteine 44–cysteine 54. Positions 75-137 (LNLLPESGEP…DGAVIQSVEA (63 aa)) are cleaved as a propeptide — acidic domain.

Belongs to the plant thionin (TC 1.C.44) family. 4 C-C subfamily.

Its subcellular location is the secreted. Functionally, thionins are small plant proteins which are toxic to animal cells. They seem to exert their toxic effect at the level of the cell membrane. Their precise function is not known. The protein is Leaf-specific thionin DB4 (THI1.3) of Hordeum vulgare (Barley).